We begin with the raw amino-acid sequence, 962 residues long: Glycine dehydrogenase (decarboxylating) (962 aa).

Lysine 709 is subject to N6-(pyridoxal phosphate)lysine.

The protein belongs to the GcvP family. As to quaternary structure, the glycine cleavage system is composed of four proteins: P, T, L and H. Pyridoxal 5'-phosphate serves as cofactor.

The enzyme catalyses N(6)-[(R)-lipoyl]-L-lysyl-[glycine-cleavage complex H protein] + glycine + H(+) = N(6)-[(R)-S(8)-aminomethyldihydrolipoyl]-L-lysyl-[glycine-cleavage complex H protein] + CO2. Functionally, the glycine cleavage system catalyzes the degradation of glycine. The P protein binds the alpha-amino group of glycine through its pyridoxal phosphate cofactor; CO(2) is released and the remaining methylamine moiety is then transferred to the lipoamide cofactor of the H protein. In Shewanella baltica (strain OS195), this protein is Glycine dehydrogenase (decarboxylating).